The primary structure comprises 414 residues: Multifunctional CCA protein (414 aa).

Residues Gly-8 and Arg-11 each coordinate ATP. CTP contacts are provided by Gly-8 and Arg-11. Positions 21 and 23 each coordinate Mg(2+). ATP is bound by residues Arg-91, Arg-137, and Arg-140. Residues Arg-91, Arg-137, and Arg-140 each contribute to the CTP site. The region spanning 228 to 329 (TGIHTLMTLA…LKLFDAIDVW (102 aa)) is the HD domain.

Belongs to the tRNA nucleotidyltransferase/poly(A) polymerase family. Bacterial CCA-adding enzyme type 1 subfamily. Monomer. Can also form homodimers and oligomers. It depends on Mg(2+) as a cofactor. Requires Ni(2+) as cofactor.

The catalysed reaction is a tRNA precursor + 2 CTP + ATP = a tRNA with a 3' CCA end + 3 diphosphate. The enzyme catalyses a tRNA with a 3' CCA end + 2 CTP + ATP = a tRNA with a 3' CCACCA end + 3 diphosphate. In terms of biological role, catalyzes the addition and repair of the essential 3'-terminal CCA sequence in tRNAs without using a nucleic acid template. Adds these three nucleotides in the order of C, C, and A to the tRNA nucleotide-73, using CTP and ATP as substrates and producing inorganic pyrophosphate. tRNA 3'-terminal CCA addition is required both for tRNA processing and repair. Also involved in tRNA surveillance by mediating tandem CCA addition to generate a CCACCA at the 3' terminus of unstable tRNAs. While stable tRNAs receive only 3'-terminal CCA, unstable tRNAs are marked with CCACCA and rapidly degraded. The polypeptide is Multifunctional CCA protein (Yersinia enterocolitica serotype O:8 / biotype 1B (strain NCTC 13174 / 8081)).